A 215-amino-acid polypeptide reads, in one-letter code: Ependymin (215 aa).

Residues 1–20 (MHTVKLLCVVFSCLCAVAWA) form the signal peptide. N-linked (GlcNAc...) asparagine glycosylation is found at Asn-71 and Asn-94.

The protein belongs to the ependymin family. In terms of assembly, forms disulfide-linked dimers. Post-translationally, binds calcium through the terminal sialic acids. As to expression, EPDs are synthesized in the meninx and secreted in the cerebrospinal fluid.

It is found in the secreted. In terms of biological role, may play a role in neural plasticity. May be involved during axon regeneration. The chain is Ependymin (epd) from Cyprinus carpio (Common carp).